The primary structure comprises 698 residues: MRVGGRFEVISPHEPAGDQPAAIDELQRRILAGERDVVLLGATGTGKSATTAWLIERLQRPTLVMAPNKTLAAQLANELRGMLPHNAVEYFVSYYDYYQPEAYIAQTDTYIEKDSSINDDVERLRHSATSSLLSRRDVVVVASVSCIYGLGTPQSYLDRSVELAVSNEVPRDGLLRLLVDVQYTRNDLSFTRGSFRVRGDTVEIIPSYEELAVRIEFFGDEIEALYYLHPLTGEVIRQVDSLRIFPATHYVAGPERMAQAISAIEEELAERLAEFERQGKLLEAQRLRMRTNYDIEMMRQVGFCSGIENYSRHIDGRGPGTPPATLLDYFPEDFLLVIDESHVTVPQIGGMYEGDMSRKRNLVEYGFRLPSACDNRPLTWEEFADRIGQTVYLSATPGPYELSQSGGEFVEQVIRPTGLVDPKVVVKPTKGQIDDLIGEIRKRANADQRVLVTTLTKKMAEDLTDYLLEMGIRVRYLHSEVDTLRRVELLRQLRLGDYDVLVGINLLREGLDLPEVSLVAILDADKEGFLRSARSLIQTIGRAARNVSGEVHMYADTITDSMTEAIDETERRRAKQIAYNNANGIDPQPLRKKIADILDQVYREADDTDTVQVGGSGRNVSRGRRAQSEPVRSVSVGVFEGRDTAGMPRAELADLIKDLTAQMMAAASDLQFELAARFRDEIADLKKELRGMDAAGLK.

Residues 28–414 (RRILAGERDV…SGGEFVEQVI (387 aa)) form the Helicase ATP-binding domain. 41-48 (GATGTGKS) provides a ligand contact to ATP. The Beta-hairpin signature appears at 94-117 (YYDYYQPEAYIAQTDTYIEKDSSI). Positions 432 to 598 (QIDDLIGEIR…PLRKKIADIL (167 aa)) constitute a Helicase C-terminal domain. The disordered stretch occupies residues 609-629 (DTVQVGGSGRNVSRGRRAQSE). One can recognise a UVR domain in the interval 653 to 688 (ADLIKDLTAQMMAAASDLQFELAARFRDEIADLKKE).

The protein belongs to the UvrB family. As to quaternary structure, forms a heterotetramer with UvrA during the search for lesions. Interacts with UvrC in an incision complex.

It is found in the cytoplasm. Its function is as follows. The UvrABC repair system catalyzes the recognition and processing of DNA lesions. A damage recognition complex composed of 2 UvrA and 2 UvrB subunits scans DNA for abnormalities. Upon binding of the UvrA(2)B(2) complex to a putative damaged site, the DNA wraps around one UvrB monomer. DNA wrap is dependent on ATP binding by UvrB and probably causes local melting of the DNA helix, facilitating insertion of UvrB beta-hairpin between the DNA strands. Then UvrB probes one DNA strand for the presence of a lesion. If a lesion is found the UvrA subunits dissociate and the UvrB-DNA preincision complex is formed. This complex is subsequently bound by UvrC and the second UvrB is released. If no lesion is found, the DNA wraps around the other UvrB subunit that will check the other stand for damage. In Mycobacterium leprae (strain TN), this protein is UvrABC system protein B.